The following is a 211-amino-acid chain: ATP phosphoribosyltransferase (211 aa).

Belongs to the ATP phosphoribosyltransferase family. Short subfamily. Heteromultimer composed of HisG and HisZ subunits.

It is found in the cytoplasm. It catalyses the reaction 1-(5-phospho-beta-D-ribosyl)-ATP + diphosphate = 5-phospho-alpha-D-ribose 1-diphosphate + ATP. It functions in the pathway amino-acid biosynthesis; L-histidine biosynthesis; L-histidine from 5-phospho-alpha-D-ribose 1-diphosphate: step 1/9. Its function is as follows. Catalyzes the condensation of ATP and 5-phosphoribose 1-diphosphate to form N'-(5'-phosphoribosyl)-ATP (PR-ATP). Has a crucial role in the pathway because the rate of histidine biosynthesis seems to be controlled primarily by regulation of HisG enzymatic activity. The chain is ATP phosphoribosyltransferase from Pseudomonas paraeruginosa (strain DSM 24068 / PA7) (Pseudomonas aeruginosa (strain PA7)).